The chain runs to 253 residues: 5'/3'-nucleotidase SurE (253 aa).

Aspartate 8, aspartate 9, serine 39, and asparagine 92 together coordinate a divalent metal cation.

It belongs to the SurE nucleotidase family. A divalent metal cation is required as a cofactor.

The protein localises to the cytoplasm. It catalyses the reaction a ribonucleoside 5'-phosphate + H2O = a ribonucleoside + phosphate. It carries out the reaction a ribonucleoside 3'-phosphate + H2O = a ribonucleoside + phosphate. The enzyme catalyses [phosphate](n) + H2O = [phosphate](n-1) + phosphate + H(+). In terms of biological role, nucleotidase with a broad substrate specificity as it can dephosphorylate various ribo- and deoxyribonucleoside 5'-monophosphates and ribonucleoside 3'-monophosphates with highest affinity to 3'-AMP. Also hydrolyzes polyphosphate (exopolyphosphatase activity) with the preference for short-chain-length substrates (P20-25). Might be involved in the regulation of dNTP and NTP pools, and in the turnover of 3'-mononucleotides produced by numerous intracellular RNases (T1, T2, and F) during the degradation of various RNAs. The chain is 5'/3'-nucleotidase SurE from Escherichia coli O17:K52:H18 (strain UMN026 / ExPEC).